The sequence spans 61 residues: Large ribosomal subunit protein uL30 (61 aa).

Belongs to the universal ribosomal protein uL30 family. In terms of assembly, part of the 50S ribosomal subunit.

The polypeptide is Large ribosomal subunit protein uL30 (Bordetella parapertussis (strain 12822 / ATCC BAA-587 / NCTC 13253)).